The sequence spans 117 residues: Large ribosomal subunit protein bL20c (117 aa).

Belongs to the bacterial ribosomal protein bL20 family.

Its subcellular location is the plastid. It is found in the chloroplast. In terms of biological role, binds directly to 23S ribosomal RNA and is necessary for the in vitro assembly process of the 50S ribosomal subunit. It is not involved in the protein synthesizing functions of that subunit. The sequence is that of Large ribosomal subunit protein bL20c from Barbarea verna (Land cress).